Here is a 750-residue protein sequence, read N- to C-terminus: Photosystem I P700 chlorophyll a apoprotein A1 (750 aa).

The next 8 membrane-spanning stretches (helical) occupy residues 70–93 (VFSA…FHGA), 156–179 (LYCT…FHYH), 195–219 (LNHH…HVSL), 291–309 (IAHH…GHMY), 346–369 (WHAQ…HHMY), 385–411 (LSLF…IFMV), 433–455 (AIIS…LYIH), and 531–549 (FLVH…LILL). The [4Fe-4S] cluster site is built by Cys573 and Cys582. 2 consecutive transmembrane segments (helical) span residues 589–610 (HVFL…HFSW) and 664–686 (LSAY…MFLF). His675 lines the chlorophyll a' pocket. Met683 and Tyr691 together coordinate chlorophyll a. Residue Trp692 participates in phylloquinone binding. Residues 724-744 (AVGVTHYLLGGIATTWAFFLA) form a helical membrane-spanning segment.

This sequence belongs to the PsaA/PsaB family. As to quaternary structure, the PsaA/B heterodimer binds the P700 chlorophyll special pair and subsequent electron acceptors. PSI consists of a core antenna complex that captures photons, and an electron transfer chain that converts photonic excitation into a charge separation. The eukaryotic PSI reaction center is composed of at least 11 subunits. P700 is a chlorophyll a/chlorophyll a' dimer, A0 is one or more chlorophyll a, A1 is one or both phylloquinones and FX is a shared 4Fe-4S iron-sulfur center. is required as a cofactor.

The protein resides in the plastid. The protein localises to the chloroplast thylakoid membrane. It catalyses the reaction reduced [plastocyanin] + hnu + oxidized [2Fe-2S]-[ferredoxin] = oxidized [plastocyanin] + reduced [2Fe-2S]-[ferredoxin]. Its function is as follows. PsaA and PsaB bind P700, the primary electron donor of photosystem I (PSI), as well as the electron acceptors A0, A1 and FX. PSI is a plastocyanin-ferredoxin oxidoreductase, converting photonic excitation into a charge separation, which transfers an electron from the donor P700 chlorophyll pair to the spectroscopically characterized acceptors A0, A1, FX, FA and FB in turn. Oxidized P700 is reduced on the lumenal side of the thylakoid membrane by plastocyanin. The protein is Photosystem I P700 chlorophyll a apoprotein A1 of Agrostis stolonifera (Creeping bentgrass).